Reading from the N-terminus, the 672-residue chain is Transcriptional activator of sulfur metabolism MET4 (672 aa).

Over residues Met1 to Asp10 the composition is skewed to basic and acidic residues. The segment at Met1–Ser44 is disordered. Residues Ser29–Ser44 are compositionally biased toward low complexity. 3 short sequence motifs (9aaTAD) span residues Ile89–Val97, Pro102–Asn110, and Ser109–Thr117. Positions Ala95–Leu144 are transcriptional activation. Disordered stretches follow at residues Ile157–Ser265 and Thr299–Val347. Residues Ser165–Gly174 are compositionally biased toward low complexity. Residues Asn175 to Pro188 show a composition bias toward basic and acidic residues. Positions Pro188–Phe235 are inhibitory region; AdoMet responsiveness; required for interaction with MET30. Polar residues predominate over residues Gln202–Gln214. The segment covering Asn226 to Asn238 has biased composition (low complexity). Composition is skewed to polar residues over residues Gly251–Ser265 and His301–Gln321. The interval Val312–Leu375 is auxiliary; required for high transcriptional activity under nonrepressive growth conditions. The tract at residues Leu375–Asn403 is required for interaction with MET31 and MET32. A Phosphoserine modification is found at Ser416. The disordered stretch occupies residues Pro475–Ala574. The segment covering Ser477–Pro486 has biased composition (polar residues). Over residues Ser487–Asp498 the composition is skewed to basic and acidic residues. A compositionally biased stretch (low complexity) spans Gly499–Val512. Composition is skewed to basic and acidic residues over residues Arg519–Ser528 and Ser537–Asp565. Ser564 bears the Phosphoserine mark. The region spanning Lys586–Ser649 is the bZIP domain. Residues Lys601–Lys612 form a basic motif region. A coiled-coil region spans residues Leu609 to Ser648. The tract at residues Leu614–Leu642 is leucine-zipper.

This sequence belongs to the bZIP family. In terms of assembly, interacts with MET30. Tethered to DNA through two alternate complexes associating MET4 with MET28 and either MET31 or MET32. Interacts with MET28 and CBF1 through its leucine zipper to form a heteromeric complex.

It localises to the nucleus. Its function is as follows. Positive trans-acting factor capable of stimulating the transcription of the MET genes from the methionine biosynthetic pathway. MET4, MET28 and CBF1 are required for full induction of MET25 and MET16 gene transcription. MET4 controls as well the derepression of MET6. Required for the transcription of genes necessary for sulfur amino acid biosynthesis. Involved in the transcription activation of MET28 and MET30. Required for MET3 gene expression via assembly of the MET4-MET28-MET31 and MET4-MET28-MET32 complexes. Involved in response to cadmium and arsenic. Cadmium-activated MET4 also induces glutathione biosynthesis. In Saccharomyces cerevisiae (strain ATCC 204508 / S288c) (Baker's yeast), this protein is Transcriptional activator of sulfur metabolism MET4 (MET4).